Reading from the N-terminus, the 83-residue chain is Cytochrome b559 subunit alpha (83 aa).

A helical transmembrane segment spans residues 21–35; that stretch reads IIHTITVPMLFLAGW. His23 lines the heme pocket.

Belongs to the PsbE/PsbF family. In terms of assembly, heterodimer of an alpha subunit and a beta subunit. PSII is composed of 1 copy each of membrane proteins PsbA, PsbB, PsbC, PsbD, PsbE, PsbF, PsbH, PsbI, PsbJ, PsbK, PsbL, PsbM, PsbT, PsbX, PsbY, PsbZ, Psb30/Ycf12, peripheral proteins PsbO, CyanoQ (PsbQ), PsbU, PsbV and a large number of cofactors. It forms dimeric complexes. It depends on heme b as a cofactor.

Its subcellular location is the cellular thylakoid membrane. In terms of biological role, this b-type cytochrome is tightly associated with the reaction center of photosystem II (PSII). PSII is a light-driven water:plastoquinone oxidoreductase that uses light energy to abstract electrons from H(2)O, generating O(2) and a proton gradient subsequently used for ATP formation. It consists of a core antenna complex that captures photons, and an electron transfer chain that converts photonic excitation into a charge separation. The polypeptide is Cytochrome b559 subunit alpha (Acaryochloris marina (strain MBIC 11017)).